Consider the following 296-residue polypeptide: Ribonuclease HIII (296 aa).

The region spanning 80–296 (LALIGSDEVG…NTKKAYQRLK (217 aa)) is the RNase H type-2 domain. Positions 86, 87, and 191 each coordinate a divalent metal cation.

Belongs to the RNase HII family. RnhC subfamily. It depends on Mn(2+) as a cofactor. Mg(2+) serves as cofactor.

It localises to the cytoplasm. It carries out the reaction Endonucleolytic cleavage to 5'-phosphomonoester.. Functionally, endonuclease that specifically degrades the RNA of RNA-DNA hybrids. This chain is Ribonuclease HIII, found in Streptococcus thermophilus (strain ATCC BAA-491 / LMD-9).